A 327-amino-acid polypeptide reads, in one-letter code: Aspartate--ammonia ligase (327 aa).

This sequence belongs to the class-II aminoacyl-tRNA synthetase family. AsnA subfamily.

The protein localises to the cytoplasm. The catalysed reaction is L-aspartate + NH4(+) + ATP = L-asparagine + AMP + diphosphate + H(+). Its pathway is amino-acid biosynthesis; L-asparagine biosynthesis; L-asparagine from L-aspartate (ammonia route): step 1/1. This Bacillus mycoides (strain KBAB4) (Bacillus weihenstephanensis) protein is Aspartate--ammonia ligase.